Reading from the N-terminus, the 217-residue chain is Trimethylamine corrinoid protein 2 (217 aa).

The B12-binding N-terminal domain occupies Met-1–Thr-92. Positions Leu-94 to Ser-217 constitute a B12-binding domain. His-107 provides a ligand contact to methylcob(III)alamin.

The protein belongs to the methylamine corrinoid protein family. In terms of assembly, can form a complex with MttB.

It functions in the pathway one-carbon metabolism; methanogenesis from trimethylamine. Acts probably as a methyl group carrier between MttB and either MtbA or MtaA. This Methanosarcina acetivorans (strain ATCC 35395 / DSM 2834 / JCM 12185 / C2A) protein is Trimethylamine corrinoid protein 2 (mttC2).